The following is a 338-amino-acid chain: Ketol-acid reductoisomerase (NADP(+)) (338 aa).

The KARI N-terminal Rossmann domain occupies 1 to 181 (MKIYYDKDCN…GGGRAGIIET (181 aa)). Residues 24-27 (YGSQ), K47, S50, S52, and 82-85 (DEIQ) each bind NADP(+). H107 is an active-site residue. Position 133 (G133) interacts with NADP(+). Positions 182-327 (SFKEETETDL…ARLRSMMSWI (146 aa)) constitute a KARI C-terminal knotted domain. D190, E194, E226, and E230 together coordinate Mg(2+). Residue S251 participates in substrate binding.

The protein belongs to the ketol-acid reductoisomerase family. Mg(2+) serves as cofactor.

The enzyme catalyses (2R)-2,3-dihydroxy-3-methylbutanoate + NADP(+) = (2S)-2-acetolactate + NADPH + H(+). It carries out the reaction (2R,3R)-2,3-dihydroxy-3-methylpentanoate + NADP(+) = (S)-2-ethyl-2-hydroxy-3-oxobutanoate + NADPH + H(+). It functions in the pathway amino-acid biosynthesis; L-isoleucine biosynthesis; L-isoleucine from 2-oxobutanoate: step 2/4. Its pathway is amino-acid biosynthesis; L-valine biosynthesis; L-valine from pyruvate: step 2/4. Functionally, involved in the biosynthesis of branched-chain amino acids (BCAA). Catalyzes an alkyl-migration followed by a ketol-acid reduction of (S)-2-acetolactate (S2AL) to yield (R)-2,3-dihydroxy-isovalerate. In the isomerase reaction, S2AL is rearranged via a Mg-dependent methyl migration to produce 3-hydroxy-3-methyl-2-ketobutyrate (HMKB). In the reductase reaction, this 2-ketoacid undergoes a metal-dependent reduction by NADPH to yield (R)-2,3-dihydroxy-isovalerate. This chain is Ketol-acid reductoisomerase (NADP(+)), found in Geobacter sulfurreducens (strain ATCC 51573 / DSM 12127 / PCA).